Consider the following 372-residue polypeptide: Cytochrome b (372 aa).

Helical transmembrane passes span 25 to 45 (FGSMLLTCLILQIMTGFFLAI), 69 to 90 (WIMQNLHAIGASLFFICIYIHI), 105 to 125 (WLSGTTLLIILMATAFFGYVL), and 170 to 190 (FFALHFILPFTIISLSSIHII). 2 residues coordinate heme b: His75 and His89. Residues His174 and His188 each contribute to the heme b site. A ubiquinone is bound at residue His193. Transmembrane regions (helical) follow at residues 218 to 238 (YKDMLMIIIMTAILFLILSFS), 280 to 300 (LGGTLALVMSVMILTTAPFTH), 312 to 332 (LSQIVFWTLIATFITITWTAT), and 339 to 358 (FISISQTASIFYFSFFIMNP).

It belongs to the cytochrome b family. In terms of assembly, the cytochrome bc1 complex contains 3 respiratory subunits (MT-CYB, CYC1 and UQCRFS1), 2 core proteins (UQCRC1 and UQCRC2) and probably 6 low-molecular weight proteins. The cofactor is heme b.

Its subcellular location is the mitochondrion inner membrane. Component of the ubiquinol-cytochrome c reductase complex (complex III or cytochrome b-c1 complex) that is part of the mitochondrial respiratory chain. The b-c1 complex mediates electron transfer from ubiquinol to cytochrome c. Contributes to the generation of a proton gradient across the mitochondrial membrane that is then used for ATP synthesis. The sequence is that of Cytochrome b (MT-CYB) from Walterinnesia aegyptia (Desert black snake).